A 232-amino-acid polypeptide reads, in one-letter code: 2,3,4,5-tetrahydropyridine-2,6-dicarboxylate N-acetyltransferase (232 aa).

Belongs to the transferase hexapeptide repeat family. DapH subfamily.

The enzyme catalyses (S)-2,3,4,5-tetrahydrodipicolinate + acetyl-CoA + H2O = L-2-acetamido-6-oxoheptanedioate + CoA. Its pathway is amino-acid biosynthesis; L-lysine biosynthesis via DAP pathway; LL-2,6-diaminopimelate from (S)-tetrahydrodipicolinate (acetylase route): step 1/3. In terms of biological role, catalyzes the transfer of an acetyl group from acetyl-CoA to tetrahydrodipicolinate. The sequence is that of 2,3,4,5-tetrahydropyridine-2,6-dicarboxylate N-acetyltransferase from Streptococcus pneumoniae serotype 2 (strain D39 / NCTC 7466).